The primary structure comprises 79 residues: Small ribosomal subunit protein bS18 (79 aa).

This sequence belongs to the bacterial ribosomal protein bS18 family. In terms of assembly, part of the 30S ribosomal subunit. Forms a tight heterodimer with protein bS6.

Binds as a heterodimer with protein bS6 to the central domain of the 16S rRNA, where it helps stabilize the platform of the 30S subunit. The sequence is that of Small ribosomal subunit protein bS18 from Listeria innocua serovar 6a (strain ATCC BAA-680 / CLIP 11262).